The chain runs to 240 residues: Large ribosomal subunit protein uL2 (240 aa).

The span at 1–11 shows a compositional bias: polar residues; the sequence is MGKRLISQNRG. 2 disordered regions span residues 1 to 26 and 206 to 240; these read MGKRLISQNRGRGTPKYRSPSHKRKG and GGGRHQHLGKPSSVSRNTSPGRKVGHIASRRTGRK. Basic residues-rich tracts occupy residues 13–26 and 228–240; these read GTPKYRSPSHKRKG and KVGHIASRRTGRK.

This sequence belongs to the universal ribosomal protein uL2 family. Part of the 50S ribosomal subunit. Forms a bridge to the 30S subunit in the 70S ribosome.

One of the primary rRNA binding proteins. Required for association of the 30S and 50S subunits to form the 70S ribosome, for tRNA binding and peptide bond formation. It has been suggested to have peptidyltransferase activity; this is somewhat controversial. Makes several contacts with the 16S rRNA in the 70S ribosome. The sequence is that of Large ribosomal subunit protein uL2 from Methanococcus vannielii (strain ATCC 35089 / DSM 1224 / JCM 13029 / OCM 148 / SB).